Here is a 263-residue protein sequence, read N- to C-terminus: Probable ABC transporter permease protein ycf63 (263 aa).

5 helical membrane-spanning segments follow: residues Ile-43–Phe-63, Glu-70–Thr-89, Ile-150–Met-170, Ile-188–Ile-208, and Ser-230–Phe-250.

The protein belongs to the MlaE permease family.

The protein resides in the plastid. It localises to the chloroplast membrane. Could be part of an ABC transporter complex. The protein is Probable ABC transporter permease protein ycf63 (ycf63) of Pyropia yezoensis (Susabi-nori).